The primary structure comprises 198 residues: Peptidyl-tRNA hydrolase (198 aa).

Position 15 (Y15) interacts with tRNA. Catalysis depends on H20, which acts as the Proton acceptor. Residues F66, N68, and N114 each coordinate tRNA.

The protein belongs to the PTH family. In terms of assembly, monomer.

It is found in the cytoplasm. The catalysed reaction is an N-acyl-L-alpha-aminoacyl-tRNA + H2O = an N-acyl-L-amino acid + a tRNA + H(+). In terms of biological role, hydrolyzes ribosome-free peptidyl-tRNAs (with 1 or more amino acids incorporated), which drop off the ribosome during protein synthesis, or as a result of ribosome stalling. Its function is as follows. Catalyzes the release of premature peptidyl moieties from peptidyl-tRNA molecules trapped in stalled 50S ribosomal subunits, and thus maintains levels of free tRNAs and 50S ribosomes. In Cupriavidus taiwanensis (strain DSM 17343 / BCRC 17206 / CCUG 44338 / CIP 107171 / LMG 19424 / R1) (Ralstonia taiwanensis (strain LMG 19424)), this protein is Peptidyl-tRNA hydrolase.